We begin with the raw amino-acid sequence, 1347 residues long: BTB/POZ domain-containing protein 1 (1347 aa).

2 ANK repeats span residues 51–81 and 86–115; these read YGRTVLHIAVSENKNSFVRSLLQHKGIDVFV and SGYTALHRAIYVGNLEAASLLLSKDPSFRS. 4 RCC1 repeats span residues 148–198, 215–264, 265–322, and 324–372; these read GNEL…DKIL, SQNV…ALTK, FGSI…AWTD, and DIYS…CLLQ. 2 consecutive BTB domains span residues 619–698 and 758–829; these read SDVT…LSPW and MDTV…VELF. Disordered regions lie at residues 1006–1029, 1104–1139, 1193–1237, and 1286–1347; these read SSNQSDSLNKEDAEEKSPKPNVVN, EKADASTTTVLSDSRFMKAPTKKSQREKKKELSKQV, EGSS…PLSI, and GILK…RAVK. Residues 1013–1023 are compositionally biased toward basic and acidic residues; sequence LNKEDAEEKSP. 2 stretches are compositionally biased toward polar residues: residues 1208 to 1237 and 1297 to 1306; these read SNGSPTSWNLLTKPSPRSASLPKNSQPLSI and NRKQGQASKQ. Basic residues predominate over residues 1336–1347; that stretch reads TTHKKGKARAVK.

Interacts with cul3.

Its pathway is protein modification; protein ubiquitination. In terms of biological role, probable substrate-specific adapter of an E3 ubiquitin-protein ligase complex which mediates the ubiquitination and subsequent proteasomal degradation of target proteins. In Schizosaccharomyces pombe (strain 972 / ATCC 24843) (Fission yeast), this protein is BTB/POZ domain-containing protein 1 (btb1).